Consider the following 210-residue polypeptide: Large ribosomal subunit protein uL3 (210 aa).

The protein belongs to the universal ribosomal protein uL3 family. In terms of assembly, part of the 50S ribosomal subunit. Forms a cluster with proteins L14 and L19.

In terms of biological role, one of the primary rRNA binding proteins, it binds directly near the 3'-end of the 23S rRNA, where it nucleates assembly of the 50S subunit. In Natranaerobius thermophilus (strain ATCC BAA-1301 / DSM 18059 / JW/NM-WN-LF), this protein is Large ribosomal subunit protein uL3.